The following is an 837-amino-acid chain: Periplasmic nitrate reductase (837 aa).

Positions methionine 1–alanine 31 form a signal peptide, tat-type signal. The 57-residue stretch at isoleucine 37 to aspartate 93 folds into the 4Fe-4S Mo/W bis-MGD-type domain. Positions 44, 47, 51, and 79 each coordinate [4Fe-4S] cluster. Mo-bis(molybdopterin guanine dinucleotide) contacts are provided by residues lysine 81, glutamine 148, asparagine 173, cysteine 177, tryptophan 210–methionine 217, serine 241–histidine 245, and glutamine 260–aspartate 262. Residues glutamate 308–lysine 329 form a disordered region. Positions alanine 319–lysine 329 are enriched in basic and acidic residues. Residues methionine 381, glutamine 385, asparagine 491, serine 517–aspartate 518, lysine 540, aspartate 567, and threonine 727–threonine 736 contribute to the Mo-bis(molybdopterin guanine dinucleotide) site. Phenylalanine 803 lines the substrate pocket. Residues asparagine 811 and lysine 828 each contribute to the Mo-bis(molybdopterin guanine dinucleotide) site.

It belongs to the prokaryotic molybdopterin-containing oxidoreductase family. NasA/NapA/NarB subfamily. As to quaternary structure, component of the periplasmic nitrate reductase NapAB complex composed of NapA and NapB. [4Fe-4S] cluster serves as cofactor. Mo-bis(molybdopterin guanine dinucleotide) is required as a cofactor. In terms of processing, predicted to be exported by the Tat system. The position of the signal peptide cleavage has not been experimentally proven.

The protein resides in the periplasm. The enzyme catalyses 2 Fe(II)-[cytochrome] + nitrate + 2 H(+) = 2 Fe(III)-[cytochrome] + nitrite + H2O. Its function is as follows. Catalytic subunit of the periplasmic nitrate reductase complex NapAB. Receives electrons from NapB and catalyzes the reduction of nitrate to nitrite. This is Periplasmic nitrate reductase from Dechloromonas aromatica (strain RCB).